Consider the following 100-residue polypeptide: NAD(P)H-quinone oxidoreductase subunit 4L, chloroplastic (100 aa).

A run of 3 helical transmembrane segments spans residues 1–21, 29–49, and 60–80; these read MLEHILSLGAYLFCIGIFGLI, ALMCLELIFNAVNINLITFSN, and IFAIFIIAIAAAEAAIGLAIV.

This sequence belongs to the complex I subunit 4L family. NDH is composed of at least 16 different subunits, 5 of which are encoded in the nucleus.

The protein resides in the plastid. The protein localises to the chloroplast thylakoid membrane. It catalyses the reaction a plastoquinone + NADH + (n+1) H(+)(in) = a plastoquinol + NAD(+) + n H(+)(out). The catalysed reaction is a plastoquinone + NADPH + (n+1) H(+)(in) = a plastoquinol + NADP(+) + n H(+)(out). Functionally, NDH shuttles electrons from NAD(P)H:plastoquinone, via FMN and iron-sulfur (Fe-S) centers, to quinones in the photosynthetic chain and possibly in a chloroplast respiratory chain. The immediate electron acceptor for the enzyme in this species is believed to be plastoquinone. Couples the redox reaction to proton translocation, and thus conserves the redox energy in a proton gradient. The chain is NAD(P)H-quinone oxidoreductase subunit 4L, chloroplastic from Physcomitrium patens (Spreading-leaved earth moss).